Consider the following 207-residue polypeptide: Coiled-coil domain-containing protein 124 homolog (207 aa).

The interval 1–90 is disordered; it reads MGNPKKRAEK…KAAKKNSSLD (90 aa). Positions 5–71 form a coiled coil; it reads KKRAEKAEAA…RLEKEEMESL (67 aa). 2 stretches are compositionally biased toward basic and acidic residues: residues 9–28 and 41–65; these read EKAE…KKDA and NKKE…RLEK.

It belongs to the CCDC124 family. Associates with translationally inactive ribosomes in the nonrotated state.

It is found in the cytoplasm. The protein resides in the nucleus. Ribosome-binding protein involved in ribosome hibernation by associating with translationally inactive ribosomes. Required for translational recovery after starvation from stationary phase. May facilitate rapid translation reactivation by stabilizing the recycling-competent state of inactive ribosomes. The protein is Coiled-coil domain-containing protein 124 homolog of Schizosaccharomyces pombe (strain 972 / ATCC 24843) (Fission yeast).